We begin with the raw amino-acid sequence, 406 residues long: Phosphatidylinositol 5-phosphate 4-kinase type-2 alpha (406 aa).

Ala2 bears the N-acetylalanine mark. Residue Thr3 is modified to Phosphothreonine. A Phosphoserine modification is found at Ser14. Residues 33–405 (ASDPLLSVLM…RFLDFIGHIL (373 aa)) enclose the PIPK domain. Residues 59–65 (VMLMPDD) form a required for interaction with PIP5K1A region. An N6-acetyllysine mark is found at Lys89 and Lys145. The segment at 288-329 (QEEVECEENDGEEEGESDGTHPVGTPPDSPGNTLNSSPPLAP) is disordered. Residues 289–304 (EEVECEENDGEEEGES) show a composition bias toward acidic residues.

Homodimer. Interacts with PIP4K2B; the interaction may regulate localization to the nucleus. Probably interacts with PIP5K1A; the interaction inhibits PIP5K1A kinase activity. Phosphorylated in tyrosines. Phosphorylation is induced by light and increases kinase activity.

Its subcellular location is the cell membrane. It is found in the nucleus. The protein localises to the lysosome. The protein resides in the cytoplasm. It localises to the photoreceptor inner segment. Its subcellular location is the cell projection. It is found in the cilium. The protein localises to the photoreceptor outer segment. It carries out the reaction a 1,2-diacyl-sn-glycero-3-phospho-(1D-myo-inositol-5-phosphate) + ATP = a 1,2-diacyl-sn-glycero-3-phospho-(1D-myo-inositol-4,5-bisphosphate) + ADP + H(+). The enzyme catalyses 1,2-dihexadecanoyl-sn-glycero-3-phospho-(1D-myo-inositol-5-phosphate) + ATP = 1,2-dihexadecanoyl-sn-glycero-3-phospho-(1D-myo-inositol-4,5-bisphosphate) + ADP + H(+). It catalyses the reaction 1,2-dihexadecanoyl-sn-glycero-3-phospho-(1D-myo-inositol-5-phosphate) + GTP = 1,2-dihexadecanoyl-sn-glycero-3-phospho-(1D-myo-inositol-4,5-bisphosphate) + GDP + H(+). Its activity is regulated as follows. In rod outer segments, activated by light. Its function is as follows. Catalyzes the phosphorylation of phosphatidylinositol 5-phosphate (PtdIns5P) on the fourth hydroxyl of the myo-inositol ring, to form phosphatidylinositol 4,5-bisphosphate (PtdIns(4,5)P2). Has both ATP- and GTP-dependent kinase activities. May exert its function by regulating the levels of PtdIns5P, which functions in the cytosol by increasing AKT activity and in the nucleus signals through ING2. May regulate the pool of cytosolic PtdIns5P in response to the activation of tyrosine phosphorylation. May be involved in thrombopoiesis, and the terminal maturation of megakaryocytes and regulation of their size. May negatively regulate insulin-stimulated glucose uptake by lowering the levels of PtdIns5P. The sequence is that of Phosphatidylinositol 5-phosphate 4-kinase type-2 alpha (PIP4K2A) from Sus scrofa (Pig).